The sequence spans 646 residues: Peptidylprolyl isomerase domain and WD repeat-containing protein 1 (646 aa).

Residues 1–30 form a disordered region; the sequence is MAAESGSDFQQRRRRRRDPEEPEKTELSER. Ala-2 carries the post-translational modification N-acetylalanine. Basic and acidic residues predominate over residues 17–30; that stretch reads RDPEEPEKTELSER. WD repeat units lie at residues 80–118, 124–162, 168–208, 213–252, 271–309, 345–386, and 401–453; these read ASMY…FWKK, EFVK…VFDV, INML…IYDG, QPLH…YWTG, TDLY…IFRF, AVER…VETN, and MQLA…MFTK. A compositionally biased stretch (basic and acidic residues) spans 455–478; that stretch reads EPEDTKSADSDRDVFNEKPSKEEV. The tract at residues 455-490 is disordered; sequence EPEDTKSADSDRDVFNEKPSKEEVMAATQAEGPKRV. The PPIase cyclophilin-type domain maps to 490 to 645; the sequence is VSDSAIIHTS…EDVSIINITV (156 aa).

Belongs to the cyclophilin-type PPIase family. PPIL1 subfamily. Identified in the spliceosome C complex.

Its subcellular location is the nucleus. It carries out the reaction [protein]-peptidylproline (omega=180) = [protein]-peptidylproline (omega=0). Its activity is regulated as follows. Inhibited by cyclosporin A (CsA). In terms of biological role, PPIase that catalyzes the cis-trans isomerization of proline imidic peptide bonds in oligopeptides and may therefore assist protein folding. May be involved in pre-mRNA splicing. This Homo sapiens (Human) protein is Peptidylprolyl isomerase domain and WD repeat-containing protein 1.